The sequence spans 39 residues: Natriuretic peptide HsNP-a (39 aa).

The propeptide occupies 1–8 (SGSKTAKI). A disulfide bridge links cysteine 12 with cysteine 28.

This sequence belongs to the natriuretic peptide family. Expressed by the venom gland.

The protein resides in the secreted. Functionally, snake venom natriuretic peptide that targets both NPR1 and NPR2. Exhibits hypotensive and vasodepressor activities. The protein is Natriuretic peptide HsNP-a of Hoplocephalus stephensii (Stephens's banded snake).